A 76-amino-acid polypeptide reads, in one-letter code: Exodeoxyribonuclease 7 small subunit (76 aa).

The protein belongs to the XseB family. As to quaternary structure, heterooligomer composed of large and small subunits.

It is found in the cytoplasm. It carries out the reaction Exonucleolytic cleavage in either 5'- to 3'- or 3'- to 5'-direction to yield nucleoside 5'-phosphates.. Bidirectionally degrades single-stranded DNA into large acid-insoluble oligonucleotides, which are then degraded further into small acid-soluble oligonucleotides. This is Exodeoxyribonuclease 7 small subunit from Bacillus mycoides (strain KBAB4) (Bacillus weihenstephanensis).